Consider the following 120-residue polypeptide: MLKFTEEHEWLKIEGDVATVGITNYAVDQLGDLVFVELPEVGATFSKNGNAATVESVKAASDVYCPLDGEITEVNPAIVADPSLVNSDPQGAGWFFKLKLANPADADGLLDEAAYKELTA.

The region spanning 17-99 (VATVGITNYA…QGAGWFFKLK (83 aa)) is the Lipoyl-binding domain. Lys58 is subject to N6-lipoyllysine.

It belongs to the GcvH family. The glycine cleavage system is composed of four proteins: P, T, L and H. (R)-lipoate is required as a cofactor.

In terms of biological role, the glycine cleavage system catalyzes the degradation of glycine. The H protein shuttles the methylamine group of glycine from the P protein to the T protein. The chain is Glycine cleavage system H protein from Rhizobium etli (strain ATCC 51251 / DSM 11541 / JCM 21823 / NBRC 15573 / CFN 42).